The primary structure comprises 275 residues: Enoyl-[acyl-carrier-protein] reductase [NADH] FabI (275 aa).

NAD(+) contacts are provided by residues Gly-13, 19-20 (SI), 64-65 (DV), and Val-92. Ala-95 is a binding site for substrate. Catalysis depends on proton acceptor residues Tyr-145 and Tyr-155. NAD(+)-binding positions include Lys-162 and 191–195 (IRTLA).

The protein belongs to the short-chain dehydrogenases/reductases (SDR) family. FabI subfamily. In terms of assembly, homotetramer.

It catalyses the reaction a 2,3-saturated acyl-[ACP] + NAD(+) = a (2E)-enoyl-[ACP] + NADH + H(+). It participates in lipid metabolism; fatty acid biosynthesis. Its function is as follows. Catalyzes the reduction of a carbon-carbon double bond in an enoyl moiety that is covalently linked to an acyl carrier protein (ACP). Involved in the elongation cycle of fatty acid which are used in the lipid metabolism. In Helicobacter pylori (strain ATCC 700392 / 26695) (Campylobacter pylori), this protein is Enoyl-[acyl-carrier-protein] reductase [NADH] FabI (fabI).